We begin with the raw amino-acid sequence, 76 residues long: Esculentin-2-ALa (76 aa).

The first 22 residues, 1 to 22 (MFTLKKSMLLLFFLGTISLSLC), serve as a signal peptide directing secretion. A propeptide spanning residues 23 to 39 (EEERNADEDDGEKEVKR) is cleaved from the precursor. C70 and C76 are joined by a disulfide.

Expressed by the skin glands.

Its subcellular location is the secreted. Its function is as follows. Antimicrobial peptide with activity against Gram-positive and Gram-negative bacteria and against fungi. Has been tested against S.aureus (MIC=2.5 ug/mL), B.pumilus (MIC=2.5 ug/mL), B.cereus (MIC=7.5 ug/mL), E.coli (MIC=12.5 ug/mL), B.dysenteriae (MIC=7.5 ug/mL), A.cacoaceticus (MIC=25.0 ug/mL), P.aeruginosa (MIC=50.0 ug/mL) and C.albicans (MIC=2.5 ug/mL). Also shows a weak hemolytic activity. In Amolops loloensis (Lolokou Sucker Frog), this protein is Esculentin-2-ALa.